We begin with the raw amino-acid sequence, 601 residues long: Probable cytochrome P450 525A1 (601 aa).

Residues Ile-12 to Ile-32 traverse the membrane as a helical segment. The disordered stretch occupies residues Asn-205 to Asn-253. Cys-544 is a heme binding site.

Belongs to the cytochrome P450 family. Heme is required as a cofactor.

It is found in the membrane. The chain is Probable cytochrome P450 525A1 (cyp525A1) from Dictyostelium discoideum (Social amoeba).